A 1820-amino-acid chain; its full sequence is Cation channel sperm-associated targeting subunit tau (1820 aa).

Residues 87-222 (DSEELEITQE…QKGCFIEEVQ (136 aa)) enclose the C2 domain. Disordered regions lie at residues 360 to 383 (SEET…ELEN), 403 to 443 (LLDN…TEVH), 695 to 722 (EVSM…SSME), and 838 to 857 (SSTK…SGSS). Residues 415-443 (PTLNQSDQDNSTADASKNDESTPSPTEVH) are compositionally biased toward polar residues.

In terms of assembly, component of the CatSper complex or CatSpermasome composed of the core pore-forming members CATSPER1, CATSPER2, CATSPER3 and CATSPER4 as well as auxiliary members CATSPERB, CATSPERG, CATSPERD, CATSPERE, CATSPERZ, C2CD6/CATSPERT, TMEM249, TMEM262 and EFCAB9. HSPA1 may be an additional auxiliary complex member. The core complex members CATSPER1, CATSPER2, CATSPER3 and CATSPER4 form a heterotetrameric channel. The auxiliary CATSPERB, CATSPERG, CATSPERD and CATSPERE subunits form a pavilion-like structure over the pore which stabilizes the complex through interactions with CATSPER4, CATSPER3, CATSPER1 and CATSPER2 respectively. SLCO6C1 interacts with CATSPERE and TMEM262/CATSPERH interacts with CATSPERB, further stabilizing the complex. C2CD6/CATSPERT interacts at least with CATSPERD and is required for targeting the CatSper complex in the flagellar membrane. Expressed in testis (at protein level).

It is found in the cell projection. The protein localises to the cilium. It localises to the flagellum membrane. Its function is as follows. Auxiliary component of the CatSper complex, a complex involved in sperm cell hyperactivation. Sperm cell hyperactivation is needed for sperm motility which is essential late in the preparation of sperm for fertilization. Required for CatSper complex targeting and trafficking into the quadrilinear nanodomains. Targets the preassembled CatSper complexes to elongating flagella, where it links the channel-carrying vesicles and motor proteins. This is Cation channel sperm-associated targeting subunit tau from Homo sapiens (Human).